The sequence spans 163 residues: Nucleotide-binding protein APJL_1242 (163 aa).

The protein belongs to the YajQ family.

Functionally, nucleotide-binding protein. The protein is Nucleotide-binding protein APJL_1242 of Actinobacillus pleuropneumoniae serotype 3 (strain JL03).